The chain runs to 170 residues: ATP synthase subunit b (170 aa).

Residues 11 to 31 (GLNTGDIIFQLIAMLILLALL) traverse the membrane as a helical segment.

This sequence belongs to the ATPase B chain family. F-type ATPases have 2 components, F(1) - the catalytic core - and F(0) - the membrane proton channel. F(1) has five subunits: alpha(3), beta(3), gamma(1), delta(1), epsilon(1). F(0) has three main subunits: a(1), b(2) and c(10-14). The alpha and beta chains form an alternating ring which encloses part of the gamma chain. F(1) is attached to F(0) by a central stalk formed by the gamma and epsilon chains, while a peripheral stalk is formed by the delta and b chains.

It localises to the cell membrane. Its function is as follows. F(1)F(0) ATP synthase produces ATP from ADP in the presence of a proton or sodium gradient. F-type ATPases consist of two structural domains, F(1) containing the extramembraneous catalytic core and F(0) containing the membrane proton channel, linked together by a central stalk and a peripheral stalk. During catalysis, ATP synthesis in the catalytic domain of F(1) is coupled via a rotary mechanism of the central stalk subunits to proton translocation. In terms of biological role, component of the F(0) channel, it forms part of the peripheral stalk, linking F(1) to F(0). The polypeptide is ATP synthase subunit b (Bacillus pumilus (strain SAFR-032)).